We begin with the raw amino-acid sequence, 248 residues long: PF03932 family protein CutC (248 aa).

The protein belongs to the CutC family. As to quaternary structure, homodimer.

Its subcellular location is the cytoplasm. In Shigella dysenteriae serotype 1 (strain Sd197), this protein is PF03932 family protein CutC.